A 269-amino-acid chain; its full sequence is L-cystine-binding protein TcyJ (269 aa).

Positions Met-1–Gly-20 are cleaved as a signal peptide. Cys-21 carries N-palmitoyl cysteine lipidation. Cys-21 carries S-diacylglycerol cysteine lipidation.

Belongs to the bacterial solute-binding protein 3 family. The complex is composed of two ATP-binding proteins (TcyN), two transmembrane proteins (TcyL and TcyM) and two solute-binding proteins (TcyJ and TcyK).

The protein localises to the cell membrane. In terms of biological role, part of the ABC transporter complex TcyJKLMN involved in L-cystine import. Is also involved in cystathionine, djenkolate, and S-methylcysteine transport. The protein is L-cystine-binding protein TcyJ (tcyJ) of Bacillus subtilis (strain 168).